The chain runs to 768 residues: Eukaryotic elongation factor 2 kinase (768 aa).

Positions 1 to 17 (MTIDTTNESDNSPTNSP) are enriched in polar residues. The tract at residues 1 to 21 (MTIDTTNESDNSPTNSPGLEA) is disordered. One can recognise an Alpha-type protein kinase domain in the interval 102–309 (RYSAIRKQWT…ICETMDLSNF (208 aa)). 279 to 284 (GDGNLG) provides a ligand contact to ATP. Residues 402–411 (SEDEEDEEED) show a composition bias toward acidic residues. The segment at 402 to 446 (SEDEEDEEEDYPRSEKSGNSQKSRRSRMSISTRSSGDESASRPRK) is disordered.

The protein belongs to the protein kinase superfamily. Alpha-type protein kinase family. Monomer or homodimer. Interacts with cmd-1 in the presence of Ca(2+).

It catalyses the reaction [translation elongation factor 2] + ATP = [translation elongation factor 2]-phosphate + ADP + H(+). Calcium(2+)/calmodulin dependent activity. Undergoes calcium/calmodulin-dependent intramolecular autophosphorylation, and this results in it becoming partially calcium/calmodulin-independent. Phosphorylates elongation factor-2 (eEF-2) at two threonine residues that are conserved in all eukaryotes and are located within a GTP-binding domain. Calcium(2+)/calmodulin dependent activity. Inactivates eEF-2 by catalyzing its phosphorylation. eEF-2 catalyzes the movement of the ribosome along mRNA during translation in eukaryotic cells. The protein is Eukaryotic elongation factor 2 kinase (efk-1) of Caenorhabditis elegans.